The chain runs to 231 residues: ADP-ribose pyrophosphatase (231 aa).

Position 2 is an N-acetylserine (F2). Substrate-binding positions include W46, 64–65 (WD), R69, and R103. One can recognise a Nudix hydrolase domain in the interval 75-214 (GGVDGIGILT…DQQGYKLDAR (140 aa)). Residue A115 participates in Mg(2+) binding. Positions 116–137 (GLIDAGEDIDTAALRELKEETG) match the Nudix box motif. L117 serves as a coordination point for substrate. Residues E131 and E135 each contribute to the Mg(2+) site. Residue D152 participates in substrate binding. E185 is a binding site for Mg(2+).

Belongs to the Nudix hydrolase family. NudF subfamily. The cofactor is Mg(2+). Mn(2+) serves as cofactor.

The catalysed reaction is ADP-D-ribose + H2O = D-ribose 5-phosphate + AMP + 2 H(+). This is ADP-ribose pyrophosphatase (YSA1) from Saccharomyces cerevisiae (strain ATCC 204508 / S288c) (Baker's yeast).